The chain runs to 122 residues: Large ribosomal subunit protein uL14 (122 aa).

This sequence belongs to the universal ribosomal protein uL14 family. In terms of assembly, part of the 50S ribosomal subunit. Forms a cluster with proteins L3 and L19. In the 70S ribosome, L14 and L19 interact and together make contacts with the 16S rRNA in bridges B5 and B8.

In terms of biological role, binds to 23S rRNA. Forms part of two intersubunit bridges in the 70S ribosome. The polypeptide is Large ribosomal subunit protein uL14 (Endomicrobium trichonymphae).